The chain runs to 598 residues: Nuclear receptor subfamily 4 group A member 2 (598 aa).

A disordered region spans residues 1–22; the sequence is MPCVQAQYGSSPQGASPASQSY. The span at 8–22 shows a compositional bias: low complexity; the sequence is YGSSPQGASPASQSY. The segment at residues 260–335 is a DNA-binding region (nuclear receptor); sequence EGLCAVCGDN…VGMVKEVVRT (76 aa). 2 NR C4-type zinc fingers span residues 263 to 283 and 299 to 318; these read CAVC…CEGC and CLAN…CQYC. A Bipartite nuclear localization signal (NLS1) motif is present at residues 287–314; that stretch reads FKRTVQKNAKYVCLANKNCPVDKRRRNR. Residues 337 to 361 are disordered; the sequence is SLKGRRGRLPSKPKSPQEPSPPSPP. The Nuclear localization signal (NLS1) motif lies at 338 to 350; the sequence is LKGRRGRLPSKPK. Residues 352–361 are compositionally biased toward pro residues; it reads PQEPSPPSPP. The 236-residue stretch at 360 to 595 folds into the NR LBD domain; it reads PPVSLISALV…AIIDKLFLDT (236 aa). The nuclear export sequence (NES1) signature appears at 443-452; the sequence is FLELFVLRLA. Positions 568–577 match the nuclear export sequence (NES2) motif; the sequence is QGLQRIFYLK.

This sequence belongs to the nuclear hormone receptor family. NR4 subfamily. As to quaternary structure, interacts with SFPQ, NCOR2, SIN3A and HADC1. The interaction with NCOR2 increases in the absence of PITX3. Interacts with PER2.

The protein localises to the cytoplasm. It localises to the nucleus. Functionally, transcriptional regulator which is important for the differentiation and maintenance of meso-diencephalic dopaminergic (mdDA) neurons during development. It is crucial for expression of a set of genes such as SLC6A3, SLC18A2, TH and DRD2 which are essential for development of mdDA neurons. In Bos taurus (Bovine), this protein is Nuclear receptor subfamily 4 group A member 2 (NR4A2).